The chain runs to 1813 residues: MASSLAAQLAQIAATSTHQLDLKAQRAAHSQSLIFEKKIAGSQDFDTIFQVCHEGFQELCSLDSRFLSFRRNIFSDQSKTEDRGQMTTSQNKELDSVLEDFLSLVGARLLLTPAVKAVDWLIRRFRVHEYNTSFLLLTFLPYHTTPLFLNFLSILPEDLTQTFKVFLPYKRSMTLPPRQVIVQSASTNKSFFSALNNYVLQVSKSQAHYQGLVSFWAGITTEALANMLDSAKSGRMEIETRNKEDVLIRILPVLNDAFMLRKAPQLVVGCYMLCVVLANKASLEDHVLDNLMEAVTGSWTQTNFVSGITCLSVLSQQKHEKSLPSKVVKAVLRLDNVIEVFEELSGRYAVTGLIIGLIRSCVQENGKRSDPARIPFVGQLIQRAILSDSETIEALTILLQAFSDLQRQGLVADGMGKQLSDLLLQFNESDTLAPLLRKAIENAGVDITQLEMTLETVLQADIMPMEIEDADLLDFISSSQTQDAFAVALEPLSQAAITESSFLAPGSSLLFDQLAEAFIHGASTKDRVSRFIKLPVLRPDKPLDDPLYLSFFIRFFSGPYPVTARTVAISIVSSCITAMADKSADMQGILPYIISALADPSERVRREAAALLSLIDRLASKCKDNDDSNAQIWGRGCLYGQNERSESVQFLPMKDIYKIIHHALMPALEEYVLDPDQVGRTLTQVIRGPRSQDDSDRTRSESTGVEFKKPLRRDLFLFLCSHASKTALYTVKLRLLKFLNKVGKIGSLNCTEALRQVFDQWRLLSLEHLQRIEDGERISTNELEDQVLSIIYPKDMDAVDLLFSSLTSNSRSNRESFLTAGFNRLKEVWPSLEETHELSLANRLLQISLSLENGKLAGAAKGLLRSVDLSGPVILEFLNKISASVPDLGSRGPPSKKRRTSQNNMVPMSSMDKETDSVLQKMTFILELIDSSHSENHPELISGLFQTLTIIHHLKLQTRSEMSYLLSLNLGILLSIVNKWKGMPTRKINTSSIRADLIIDCVRTSESPQVQNTALLLVAGLATVAPELVLHSVMPIFTFMGSSVLRKDDEYSALVIDQTIDQVVPPLVQSLRNQKRDVVSGTSELLLSFTTAFEHIPSYRRLRLFEALITKLGPEDFLFAVFAMFANRYSMDKDVLATMTALASDCNAELQLITYARYLNLVKDTLQPKPTLAKTLLGVGSEDGRDPQKIAVDLLQALSHLLKFTSLRTKMSECFDSGTEQQVDKAHGLFSTILEQTLALSESVRTVKPVNSACGETLGTLLGTLSLVDFVDTIEVLLQRPSDDLRRKVIKLLENRLDSSNDRDKASQARVLSFLTVLINILETSPDILLKHAAVACIEKIGEKYGKKDPSQVLAAAKVISGEHCLGQPDRRIRVMGLLCLASMSEILGEGIIPTLPEALPRAIDLLRDTLAASDDDSQLHDAVYSLISALLIHVPWMISGEYLDNILQLSFISSNTDLAEGSDENRLEALQLLAKRVDVKEAFAGVERNWDSAVTQGSRAVQEALDVVRTAIEKHAKSATVKNVSVLMKLLCKAFDLRRLQLSPLNDGGFDEAEVDEIESRANDVAVRMIYKLNDTVFRPLFIDLTAWAVSGLGKKDTTGRVARLTTFYRFLESFFGTLKSIVTGYSSYIIESAVEVLKFSRCNDKATKTLWLAVLRMLRNSFGHDQDEFWQSPTHLASISEPLIKQLSMATNSPTLDLVAAEAIPTIVELAVAADSPDNHKELNTVIMKFMRAGHGNARGADNPYTRLAAVKCEQQLTERLGEEWLALLPEMLPYISELLEDDDENVEREVRRWVLSIEDILGEKLDDMLT.

5 HEAT repeats span residues 245–283, 389–427, 428–464, 584–621, and 659–695; these read DVLIRILPVLNDAFMLRKAPQLVVGCYMLCVVLANKASL, SETIEALTILLQAFSDLQRQGLVADGMGKQLSDLLLQFN, ESDTLAPLLRKAIENAGVDITQLEMTLETVLQADIMP, ADMQGILPYIISALADPSERVRREAAALLSLIDRLASK, and IIHHALMPALEEYVLDPDQVGRTLTQVIRGPRSQDDS. 2 disordered regions span residues 686–705 and 887–912; these read IRGPRSQDDSDRTRSESTGV and DLGSRGPPSKKRRTSQNNMVPMSSMD. The span at 690–705 shows a compositional bias: basic and acidic residues; it reads RSQDDSDRTRSESTGV. HEAT repeat units lie at residues 1058–1095, 1189–1228, 1265–1302, 1309–1347, 1398–1437, 1678–1715, and 1769–1806; these read QTIDQVVPPLVQSLRNQKRDVVSGTSELLLSFTTAFEH, KIAVDLLQALSHLLKFTSLRTKMSECFDSGTEQQVDKAHG, LSLVDFVDTIEVLLQRPSDDLRRKVIKLLENRLDSSND, ARVLSFLTVLINILETSPDILLKHAAVACIEKIGEKYGK, EALPRAIDLLRDTLAASDDDSQLHDAVYSLISALLIHVPW, LASISEPLIKQLSMATNSPTLDLVAAEAIPTIVELAVA, and ALLPEMLPYISELLEDDDENVEREVRRWVLSIEDILGE.

Belongs to the HEATR1/UTP10 family. In terms of assembly, component of the ribosomal small subunit (SSU) processome.

The protein localises to the nucleus. It localises to the nucleolus. In terms of biological role, involved in nucleolar processing of pre-18S ribosomal RNA. Involved in ribosome biosynthesis. The sequence is that of U3 small nucleolar RNA-associated protein 10 from Coccidioides immitis (strain RS) (Valley fever fungus).